An 858-amino-acid chain; its full sequence is Elongation factor 2 (858 aa).

One can recognise a tr-type G domain in the interval 17 to 362 (ANIRNMSVIA…MITIHLPSPV (346 aa)). GTP is bound at residue 26–33 (AHVDHGKS). Position 54 is a phosphothreonine (Thr54). Thr57 is subject to Phosphothreonine; by EEF2K. Thr59 is modified (phosphothreonine). Position 152 is an N6-succinyllysine (Lys152). GTP is bound by residues 158–161 (NKMD) and 216–218 (SGL). At Lys235 the chain carries N6-acetyllysine. Lys239 carries the post-translational modification N6-acetyllysine; alternate. Lys239 is covalently cross-linked (Glycyl lysine isopeptide (Lys-Gly) (interchain with G-Cter in SUMO1); alternate). Tyr265 carries the phosphotyrosine; by CSK modification. Lys272 carries the N6-acetyllysine; alternate modification. Lys272 is modified (N6-succinyllysine; alternate). Lys275 carries the N6-acetyllysine modification. A Glycyl lysine isopeptide (Lys-Gly) (interchain with G-Cter in SUMO) cross-link involves residue Lys322. A Phosphoserine modification is found at Ser325. At Tyr373 the chain carries Phosphotyrosine; by CSK. The residue at position 435 (Thr435) is a Phosphothreonine. N6-acetyllysine is present on residues Lys439 and Lys445. A Phosphoserine modification is found at Ser502. At Lys525 the chain carries N6,N6,N6-trimethyllysine; by EEF2KMT. Lys529 is covalently cross-linked (Glycyl lysine isopeptide (Lys-Gly) (interchain with G-Cter in SUMO)). At Lys572 the chain carries N6-succinyllysine. Ser595 carries the post-translational modification Phosphoserine; by CDK2. Lys619 bears the N6-acetyllysine mark. His715 is modified (diphthamide).

It belongs to the TRAFAC class translation factor GTPase superfamily. Classic translation factor GTPase family. EF-G/EF-2 subfamily. In terms of assembly, binds to 80S ribosomes. Actively translating ribosomes show mutually exclusive binding of eIF5a (EIF5A or EIF5A2) and EEF2/eEF2. Interacts with SERBP1; interaction sequesters EEF2/eEF2 at the A-site of the ribosome, thereby blocking the interaction sites of the mRNA-tRNA complex, promoting ribosome stabilization and hibernation. Interacts with HABP4; interaction takes place at the A-site of hibernating ribosomes and promotes ribosome stabilization. Component of the mRNA surveillance SURF complex, at least composed of ERF1, ERF3 (ERF3A or ERF3B), EEF2, UPF1/RENT1, SMG1, SMG8 and SMG9. Interacts with RBPMS2. Phosphorylation by EF-2 kinase completely inactivates EF-2; it requires prior phosphorylation by CDK2 at Ser-595 during mitotic prometaphase. Phosphorylation by CSK promotes SUMOylation, proteolytic cleavage, and nuclear translocation if the C-terminal fragment. In terms of processing, diphthamide is 2-[3-carboxyamido-3-(trimethyl-ammonio)propyl]histidine. Post-translationally, ISGylated. Proteolytically processed at two sites following phosphorylation by CSK. In terms of processing, SUMOylated following phosphorylation by CSK, promotes proteolytic cleavage.

The protein resides in the cytoplasm. It localises to the nucleus. It catalyses the reaction GTP + H2O = GDP + phosphate + H(+). Catalyzes the GTP-dependent ribosomal translocation step during translation elongation. During this step, the ribosome changes from the pre-translocational (PRE) to the post-translocational (POST) state as the newly formed A-site-bound peptidyl-tRNA and P-site-bound deacylated tRNA move to the P and E sites, respectively. Catalyzes the coordinated movement of the two tRNA molecules, the mRNA and conformational changes in the ribosome. This Bos taurus (Bovine) protein is Elongation factor 2 (EEF2).